We begin with the raw amino-acid sequence, 103 residues long: Flagellar hook-basal body complex protein FliE (103 aa).

The protein belongs to the FliE family.

It is found in the bacterial flagellum basal body. The chain is Flagellar hook-basal body complex protein FliE from Photorhabdus laumondii subsp. laumondii (strain DSM 15139 / CIP 105565 / TT01) (Photorhabdus luminescens subsp. laumondii).